Consider the following 444-residue polypeptide: Chitinase-like protein Idgf4 (444 aa).

Positions 1 to 22 are cleaved as a signal peptide; it reads MKLLLILLGALLAVLTIKRTSA. The region spanning 27–444 is the GH18 domain; that stretch reads NHLICYYDGT…ILRAIKFKFQ (418 aa). An intrachain disulfide couples Cys-31 to Cys-58. A glycan (N-linked (GlcNAc...) asparagine) is linked at Asn-226. Cys-345 and Cys-428 are joined by a disulfide.

It belongs to the glycosyl hydrolase 18 family. IDGF subfamily. Glycosylated.

The protein localises to the secreted. Its function is as follows. Cooperates with insulin-like peptides to stimulate the proliferation, polarization and motility of imaginal disk cells. May act by stabilizing the binding of insulin-like peptides to its receptor through a simultaneous interaction with both molecules to form a multiprotein signaling complex. This is Chitinase-like protein Idgf4 (Idgf4) from Glossina morsitans morsitans (Savannah tsetse fly).